Reading from the N-terminus, the 281-residue chain is Probable feruloyl esterase A (281 aa).

A signal peptide spans 1–21 (MKNFVSMHAILLACSAGAGLA). Cystine bridges form between Cys-50–Cys-279, Cys-112–Cys-115, and Cys-248–Cys-255. A substrate-binding site is contributed by Asp-98. An N-linked (GlcNAc...) asparagine glycan is attached at Asn-100. Tyr-101 provides a ligand contact to substrate. Ser-154 acts as the Nucleophile in catalysis. The N-linked (GlcNAc...) asparagine glycan is linked to Asn-173. The Charge relay system role is filled by Asp-215. His-268 is a binding site for substrate. The active-site Charge relay system is His-268.

Belongs to the AB hydrolase superfamily. FaeA family.

It localises to the secreted. It catalyses the reaction feruloyl-polysaccharide + H2O = ferulate + polysaccharide.. Involved in degradation of plant cell walls. Hydrolyzes the feruloyl-arabinose ester bond in arabinoxylans, and the feruloyl-galactose ester bond in pectin. This is Probable feruloyl esterase A (faeA) from Aspergillus flavus (strain ATCC 200026 / FGSC A1120 / IAM 13836 / NRRL 3357 / JCM 12722 / SRRC 167).